The primary structure comprises 560 residues: Glucose-6-phosphate isomerase, cytosolic (560 aa).

Ala2 carries the N-acetylalanine modification. Glu361 acts as the Proton donor in catalysis. Residues His392 and Lys517 contribute to the active site.

Belongs to the GPI family. As to quaternary structure, homodimer.

It is found in the cytoplasm. The enzyme catalyses alpha-D-glucose 6-phosphate = beta-D-fructose 6-phosphate. It participates in carbohydrate degradation; glycolysis; D-glyceraldehyde 3-phosphate and glycerone phosphate from D-glucose: step 2/4. Its activity is regulated as follows. Inhibited by glycerol-3-P (G3P). This Arabidopsis thaliana (Mouse-ear cress) protein is Glucose-6-phosphate isomerase, cytosolic (PGIC).